The sequence spans 650 residues: Probable LIM domain-containing serine/threonine-protein kinase DDB_G0287001 (650 aa).

2 LIM zinc-binding domains span residues 4–63 (NNCG…KLNA) and 64–122 (RKCF…PSDK). Disordered stretches follow at residues 118 to 138 (KPSD…LPGK), 171 to 197 (LSSS…SSFM), and 293 to 320 (LLNS…NLNT). Gly residues predominate over residues 173 to 188 (SSGGSGNSISGSGGTN). Positions 386-643 (VAFGDVIASG…DTLKKISESL (258 aa)) constitute a Protein kinase domain. ATP is bound by residues 392–400 (IASGASGKV) and K413. The active-site Proton acceptor is the D509.

Belongs to the protein kinase superfamily. TKL Ser/Thr protein kinase family.

The catalysed reaction is L-seryl-[protein] + ATP = O-phospho-L-seryl-[protein] + ADP + H(+). The enzyme catalyses L-threonyl-[protein] + ATP = O-phospho-L-threonyl-[protein] + ADP + H(+). The chain is Probable LIM domain-containing serine/threonine-protein kinase DDB_G0287001 from Dictyostelium discoideum (Social amoeba).